Reading from the N-terminus, the 363-residue chain is Protein RecA (363 aa).

Position 66–73 (66–73 (GPESSGKT)) interacts with ATP. The tract at residues 327-363 (YGIDEKSIADRENPEKIKEKREETSEENKTDNSEKTK) is disordered. The span at 329–363 (IDEKSIADRENPEKIKEKREETSEENKTDNSEKTK) shows a compositional bias: basic and acidic residues.

The protein belongs to the RecA family.

The protein resides in the cytoplasm. Can catalyze the hydrolysis of ATP in the presence of single-stranded DNA, the ATP-dependent uptake of single-stranded DNA by duplex DNA, and the ATP-dependent hybridization of homologous single-stranded DNAs. It interacts with LexA causing its activation and leading to its autocatalytic cleavage. This Lactobacillus acidophilus (strain ATCC 700396 / NCK56 / N2 / NCFM) protein is Protein RecA.